The sequence spans 279 residues: Undecaprenyl-diphosphatase (279 aa).

8 helical membrane-spanning segments follow: residues 2 to 22 (LFIELLKAIFFGVIEGVTEWL), 44 to 64 (AFMEMFNIVIQLGAIIAVIVI), 85 to 105 (WQLWLKVAIACIPSIIIAVPL), 113 to 133 (FNHMLPIAIALIVYGIAFLWI), 163 to 183 (VLSIIPGTSRSGATILGAIIL), 188 to 208 (TVAADFTFFLAIPTMFGYSGL), 225 to 245 (LLVLLVASLTAFAVSLYVIKL), and 255 to 275 (FTVFGRYRIVLGSLLIVYSVF).

It belongs to the UppP family.

It is found in the cell membrane. The enzyme catalyses di-trans,octa-cis-undecaprenyl diphosphate + H2O = di-trans,octa-cis-undecaprenyl phosphate + phosphate + H(+). Functionally, catalyzes the dephosphorylation of undecaprenyl diphosphate (UPP). Confers resistance to bacitracin. The polypeptide is Undecaprenyl-diphosphatase (Streptococcus equi subsp. zooepidemicus (strain MGCS10565)).